Consider the following 256-residue polypeptide: 5-oxoprolinase subunit A 3 (256 aa).

This sequence belongs to the LamB/PxpA family. In terms of assembly, forms a complex composed of PxpA, PxpB and PxpC.

It carries out the reaction 5-oxo-L-proline + ATP + 2 H2O = L-glutamate + ADP + phosphate + H(+). Functionally, catalyzes the cleavage of 5-oxoproline to form L-glutamate coupled to the hydrolysis of ATP to ADP and inorganic phosphate. This chain is 5-oxoprolinase subunit A 3, found in Pseudomonas syringae pv. tomato (strain ATCC BAA-871 / DC3000).